The chain runs to 472 residues: Squamosa promoter-binding-like protein 18 (472 aa).

The segment at 89-110 (AKVPPSTSTLKRPRGGGGGGGG) is disordered. Residues 112-189 (CPSCAVDGCK…DGHNRRRRKP (78 aa)) form an SBP-type zinc finger. Zn(2+)-binding residues include Cys115, Cys120, Cys137, His140, Cys156, Cys159, His163, and Cys175. The short motif at 172–188 (KRSCRKRLDGHNRRRRK) is the Bipartite nuclear localization signal element. Disordered stretches follow at residues 179–218 (LDGHNRRRRKPQADSMSSGSFMTSQQGTRFASFTPPRPEP), 233–261 (SHHHHPHPVMTSRQPHFVGSPSSATTAAF), and 358–381 (SVDVSRMVQPSPAAAAGAEHHHHH). The span at 192-209 (DSMSSGSFMTSQQGTRFA) shows a compositional bias: polar residues. Residues 252–261 (SPSSATTAAF) are compositionally biased toward low complexity.

Expressed in young panicles.

The protein localises to the nucleus. In terms of biological role, trans-acting factor that binds specifically to the consensus nucleotide sequence 5'-TNCGTACAA-3'. May be involved in panicle development. This Oryza sativa subsp. japonica (Rice) protein is Squamosa promoter-binding-like protein 18 (SPL18).